A 325-amino-acid chain; its full sequence is Small ribosomal subunit protein uS3 (325 aa).

Positions 38 to 106 (IRKMMSKGME…QVQLNILEVK (69 aa)) constitute a KH type-2 domain. The tract at residues 217 to 325 (EALLRQQRRE…AQGAPEKAEG (109 aa)) is disordered. Residues 222–232 (QQRRERPRRGP) are compositionally biased toward basic residues. Low complexity predominate over residues 285-316 (TESAAVEGTPVETPAVTPETTAAPAAVTTAEA).

This sequence belongs to the universal ribosomal protein uS3 family. Part of the 30S ribosomal subunit. Forms a tight complex with proteins S10 and S14.

Its function is as follows. Binds the lower part of the 30S subunit head. Binds mRNA in the 70S ribosome, positioning it for translation. This Parafrankia sp. (strain EAN1pec) protein is Small ribosomal subunit protein uS3.